Here is a 642-residue protein sequence, read N- to C-terminus: Envelope glycoprotein (642 aa).

The signal sequence occupies residues 1–34 (MESPTHPKPSKDKTLSWNLAFLVGILFTIDIGMA). Over 35–586 (NPSPHQIYNV…FNKSPWFTTL (552 aa)) the chain is Extracellular. N-linked (GlcNAc...) asparagine; by host glycans are attached at residues asparagine 43 and asparagine 58. 2 cysteine pairs are disulfide-bonded: cysteine 125–cysteine 147 and cysteine 139–cysteine 152. The tract at residues 233 to 283 (PPQAMGPNLVLPDQKPPSRQSQTGSKVATQRPQTNESAPRSVAPTTMGPKR) is disordered. Over residues 249 to 270 (PSRQSQTGSKVATQRPQTNESA) the composition is skewed to polar residues. 3 N-linked (GlcNAc...) asparagine; by host glycosylation sites follow: asparagine 267, asparagine 302, and asparagine 307. Cystine bridges form between cysteine 312–cysteine 315, cysteine 312–cysteine 539, and cysteine 531–cysteine 538. The CXXC signature appears at 312–315 (CWLC). N-linked (GlcNAc...) asparagine; by host glycans are attached at residues asparagine 334, asparagine 374, asparagine 390, and asparagine 410. The interval 448–468 (ISLTVALMLGGLTVGGIAAGV) is fusion peptide. 2 coiled-coil regions span residues 476–525 (LETA…ILFL) and 535–571 (KEEC…SQQG). Residues 514–530 (LQNRRGLDILFLQEGGL) are immunosuppression. The short motif at 531–539 (CAALKEECC) is the CX6CC element. Residues 587 to 607 (ISSIMGPLLILLLILLFGPCI) traverse the membrane as a helical segment. Cysteine 606 carries S-palmitoyl cysteine; by host lipidation. Residues 608–642 (LNRLVQFVKDRISVVQALILTQQYQQIKQYDPDRP) lie on the Cytoplasmic side of the membrane.

As to quaternary structure, the mature envelope protein (Env) consists of a trimer of SU-TM heterodimers attached by a labile interchain disulfide bond. Specific enzymatic cleavages in vivo yield mature proteins. Envelope glycoproteins are synthesized as an inactive precursor that is N-glycosylated and processed likely by host cell furin or by a furin-like protease in the Golgi to yield the mature SU and TM proteins. The cleavage site between SU and TM requires the minimal sequence [KR]-X-[KR]-R. The R-peptide is released from the C-terminus of the cytoplasmic tail of the TM protein upon particle formation as a result of proteolytic cleavage by the viral protease. Cleavage of this peptide is required for TM to become fusogenic. In terms of processing, the CXXC motif is highly conserved across a broad range of retroviral envelope proteins. It is thought to participate in the formation of a labile disulfide bond possibly with the CX6CC motif present in the transmembrane protein. Isomerization of the intersubunit disulfide bond to an SU intrachain disulfide bond is thought to occur upon receptor recognition in order to allow membrane fusion. Post-translationally, the transmembrane protein is palmitoylated. The R-peptide is palmitoylated.

It is found in the virion membrane. It localises to the host cell membrane. In terms of biological role, the surface protein (SU) attaches the virus to the host cell by binding to its receptor. This interaction triggers the refolding of the transmembrane protein (TM) and is thought to activate its fusogenic potential by unmasking its fusion peptide. Fusion occurs at the host cell plasma membrane. The transmembrane protein (TM) acts as a class I viral fusion protein. Under the current model, the protein has at least 3 conformational states: pre-fusion native state, pre-hairpin intermediate state, and post-fusion hairpin state. During viral and target cell membrane fusion, the coiled coil regions (heptad repeats) assume a trimer-of-hairpins structure, positioning the fusion peptide in close proximity to the C-terminal region of the ectodomain. The formation of this structure appears to drive apposition and subsequent fusion of viral and target cell membranes. Membranes fusion leads to delivery of the nucleocapsid into the cytoplasm. The protein is Envelope glycoprotein (env) of Felidae (cat family).